A 266-amino-acid chain; its full sequence is Protein crossbronx-like (266 aa).

In terms of domain architecture, UBC core spans 15 to 178 (KQGYKILAEY…IQELAISSRR (164 aa)). Positions 216–266 (EATCEDDSPPAELLGHIDSSRQLDEDEANQRGKLQAATTDLQHGARCSVAQ) are disordered.

It belongs to the ubiquitin-conjugating enzyme family. FTS subfamily.

The chain is Protein crossbronx-like from Drosophila ananassae (Fruit fly).